Consider the following 592-residue polypeptide: V-type ATP synthase alpha chain 1 (592 aa).

Residue 233–240 (GPFGSGKT) participates in ATP binding.

The protein belongs to the ATPase alpha/beta chains family.

It carries out the reaction ATP + H2O + 4 H(+)(in) = ADP + phosphate + 5 H(+)(out). Produces ATP from ADP in the presence of a proton gradient across the membrane. The V-type alpha chain is a catalytic subunit. The chain is V-type ATP synthase alpha chain 1 from Clostridium tetani (strain Massachusetts / E88).